Consider the following 264-residue polypeptide: Acyl-[acyl-carrier-protein]--UDP-N-acetylglucosamine O-acyltransferase (264 aa).

Belongs to the transferase hexapeptide repeat family. LpxA subfamily. Homotrimer.

The protein resides in the cytoplasm. The catalysed reaction is a (3R)-hydroxyacyl-[ACP] + UDP-N-acetyl-alpha-D-glucosamine = a UDP-3-O-[(3R)-3-hydroxyacyl]-N-acetyl-alpha-D-glucosamine + holo-[ACP]. It participates in glycolipid biosynthesis; lipid IV(A) biosynthesis; lipid IV(A) from (3R)-3-hydroxytetradecanoyl-[acyl-carrier-protein] and UDP-N-acetyl-alpha-D-glucosamine: step 1/6. In terms of biological role, involved in the biosynthesis of lipid A, a phosphorylated glycolipid that anchors the lipopolysaccharide to the outer membrane of the cell. This chain is Acyl-[acyl-carrier-protein]--UDP-N-acetylglucosamine O-acyltransferase, found in Actinobacillus pleuropneumoniae serotype 7 (strain AP76).